The following is a 1829-amino-acid chain: MIFQSFILGNLVSLCMKIINSVVVVGLYYGFMTTFSIGPSYLFLLRARVMEEGEEGTEKKVSATTGFIAGQLMMFISIYYAPLHLALGRPHTITVLALPYLLFHFFWNNPKHFFDYGSTTRNSMRNLSIQCVFLNNLIFQLFNHFLLPSSMLARLVNIYMFRCNNKMLFVTSSFVGWLIGHILFMKWVGLVLVWMQQKNSIRSNVLIRFNKYLVSELRNSMARIFSILLFITCIYYLGRIPSPIFTKKLKVKETSETEERDVEIEKTFERGGTKQGQEVSAEEDPSPSLFSEEKEDPDKIEETEEIRVNGKEKKKTKHEFHLRFKETCDKNSPVYETSYLDGNQENSKFEIFQLFKEKKEEKYLLWFEKPLVTLLFDYKRWTRPLRYKKNNRFENAVRNEMSHYFFYACRSDGKERISFTYPASLSTFLDMIKKNNYFFATEKLSSDEFSTHWNYTNNQKIKNLSKEFRNRLEGLDKGSLIRDILEKRTQLCNDKTKKKYLPKTYDPLLNGPYRGRIKKFFSPPILNTTYIKNKIRTPWINKIHNLIFINDYHEFEQTIDRFNRKSFSSEEVRSLLTEREREHIDSEDRIKSLNFLFDAVITDPNDQKIRKKAIKEISKRVPRWSYKLIDNVYQELGEYDENVRGKHAFRSRKAKRLVVAVDHQTKGDVSLPHYLEQSDFRRYIIKGSMRAQRRKTVIWKPVQANAHSPLFLDRIDKTLYLSFDISQLMKVILRNWMVKNKNQKLSDYTNAKTRKLDKKEKKKLKGERYQRQEMVRIKQAEGWDKRLLTRILRSSMLVIQSILRKYIVLPLLIIAKNVVRILLFQDPEWSEDFKDWNREIYVKCTYSGVNLSETEFPKNWLIEGIQIKILFPFHLKPWHGSTIQSSHKDPKSEQETDVCFLTIFGLETDMPFGSPQKRRSFFEPIFKELKKKIRKLKTKSFIVLRDFKEGKIKELSKINLREIEKLRETQKNSIISKQMIHEPSIEISSMDWTKLSRTEKKMKDLTNRTSRIRNQIYKITKEKKKGSLTQETNISSNKPTYSVKILDPSKRIWRILKKRNARLIRKSYLFLKFGIEKIYRNIFISTLTIPRINTKPFRESTRKQMKIIEKNIHNNEANPERINKTNKNRIISTIQKLISKTSNKNSKISCNLLSFSQSQAYVFYKLLQVPILNFYNLRPVLQYHGTSLFLKNEIKDFFEKHGIFNYQLRHKPLWNFGRNTRKHCLSGHYQYDLSRIKWARLVPQEWRNRANQHCMAQNKDLIKRDSYEKNGLTHYEKQHFFEADLLRNQKSNFKKHYRYDLLSYKSLNYEDKKDSYIDRSLVQVNNKEEYYSNYNRKKVKLLAMLGSISINNYIGEDDIMDMEKFLYRKYFDWRILNFCLRNKANMEAWVDMDTGTSSNQNTRIGSNNYQKINAINNRVPFYLTIHQDEEINPSTQKGFFCDWMGMNEEILSCPISNPESWFFPEFVLLFNAYRTKPWIIPIKLLLFNFNGNSKKNRTGKKEADLFISPTQKEYFELSNQSKEENELADQGTPRSDAQKQVILGSVLSNQEKDGEENYTGSDMKTRIKKKQSKRETEVQLDFFLKRYLCLQLRWRGAVSFREKILNDMQVYCHLVRLINPSDVAIASIQRGEMSLPILITKKKFALKELTKGGMLIIEPRRLSVKNDGQFFLYQIVGIALVHKNKRKITKRYQEKGYVDKKDFDEFIAKHQKMTGNRNKNHYDLLVPETILLPKRRRELRTLICFNSKNQNGMQKNPVFFNNGKGGGRVLDKNKNLAREKNQLIQLKFFIWANSRLEDLICMNRYWFNTNNGSRFSMVRVHMYPRLKIR.

A run of 6 helical transmembrane segments spans residues 18–38 (IINS…FSIG), 67–87 (FIAG…HLAL), 90–110 (PHTI…WNNP), 127–147 (LSIQ…HFLL), 174–194 (FVGW…VLVW), and 224–244 (IFSI…PSPI). Residues 260 to 272 (RDVEIEKTFERGG) show a composition bias toward basic and acidic residues. The disordered stretch occupies residues 260 to 301 (RDVEIEKTFERGGTKQGQEVSAEEDPSPSLFSEEKEDPDKIE).

Belongs to the TIC214 family. Part of the Tic complex.

The protein localises to the plastid. It is found in the chloroplast inner membrane. Its function is as follows. Involved in protein precursor import into chloroplasts. May be part of an intermediate translocation complex acting as a protein-conducting channel at the inner envelope. In Citrus sinensis (Sweet orange), this protein is Protein TIC 214.